The sequence spans 388 residues: Venom acid phosphatase Acph-1 (388 aa).

The signal sequence occupies residues 1-15 (MSVIAILAMVVGVQA). H26 serves as the catalytic Nucleophile. 2 disulfides stabilise this stretch: C145-C355 and C330-C334. N-linked (GlcNAc...) asparagine glycosylation is found at N182 and N228. E273 (proton donor) is an active-site residue. N-linked (GlcNAc...) asparagine glycosylation occurs at N366.

This sequence belongs to the histidine acid phosphatase family. Expressed by the venom gland.

It is found in the secreted. It catalyses the reaction a phosphate monoester + H2O = an alcohol + phosphate. This Apis mellifera (Honeybee) protein is Venom acid phosphatase Acph-1.